Consider the following 150-residue polypeptide: Large ribosomal subunit protein bL9 (150 aa).

This sequence belongs to the bacterial ribosomal protein bL9 family.

In terms of biological role, binds to the 23S rRNA. In Streptococcus pyogenes serotype M18 (strain MGAS8232), this protein is Large ribosomal subunit protein bL9.